The chain runs to 682 residues: Serine/threonine-protein kinase PAK 6 (682 aa).

Disordered stretches follow at residues 1 to 30 (MFRK…DPKE), 132 to 170 (SPQS…QALP), 200 to 256 (LQSS…QESS), and 270 to 367 (PATG…NLYL). In terms of domain architecture, CRIB spans 12 to 25 (ISAPQNFQHRVHTS). A linker region spans residues 26-407 (FDPKEGKFVG…VVDQGDPRLL (382 aa)). 2 stretches are compositionally biased toward polar residues: residues 270-279 (PATGAASSSK) and 297-334 (KDSS…QKSL). In terms of domain architecture, Protein kinase spans 408-659 (LDSYVKIGEG…AQELLDHPFL (252 aa)). Residues 414 to 422 (IGEGSTGIV) and Lys437 each bind ATP. Residue Asp527 is the Proton acceptor of the active site. Position 561 is a phosphoserine; by autocatalysis (Ser561).

The protein belongs to the protein kinase superfamily. STE Ser/Thr protein kinase family. STE20 subfamily. As to quaternary structure, interacts tightly with GTP-bound but not GDP-bound CDC42/p21 and RAC1. Interacts with the androgen receptor AR. Interacts with IQGAP1 and PPM1B. Autophosphorylated. Phosphorylated by MAP2K6/MAPKK6, leading to PAK6 activation.

The protein localises to the cytoplasm. Its subcellular location is the nucleus. The enzyme catalyses L-seryl-[protein] + ATP = O-phospho-L-seryl-[protein] + ADP + H(+). It catalyses the reaction L-threonyl-[protein] + ATP = O-phospho-L-threonyl-[protein] + ADP + H(+). Functionally, serine/threonine protein kinase that plays a role in the regulation of gene transcription. The kinase activity is induced by various effectors including AR or MAP2K6/MAPKK6. Phosphorylates the DNA-binding domain of androgen receptor/AR and thereby inhibits AR-mediated transcription. Also inhibits ESR1-mediated transcription. May play a role in cytoskeleton regulation by interacting with IQGAP1. May protect cells from apoptosis through phosphorylation of BAD. This Mus musculus (Mouse) protein is Serine/threonine-protein kinase PAK 6 (Pak6).